A 65-amino-acid polypeptide reads, in one-letter code: MELRAKALREMSDEELNEKLSSLKESLLRERSSVAMGGAPSSPGKMRSIRRQIARVLTVMEEKKR.

The disordered stretch occupies residues Glu-30–Ile-49.

The protein belongs to the universal ribosomal protein uL29 family.

This is Large ribosomal subunit protein uL29 from Picrophilus torridus (strain ATCC 700027 / DSM 9790 / JCM 10055 / NBRC 100828 / KAW 2/3).